We begin with the raw amino-acid sequence, 318 residues long: Triplex capsid protein 2 (318 aa).

This sequence belongs to the herpesviridae TRX2 protein family. As to quaternary structure, interacts with TRX1 and major capisd protein/MCP.

The protein resides in the virion. The protein localises to the host nucleus. Its function is as follows. Structural component of the T=16 icosahedral capsid. The capsid is composed of pentamers and hexamers of major capsid protein/MCP, which are linked together by heterotrimers called triplexes. These triplexes are formed by a single molecule of triplex protein 1/TRX1 and two copies of triplex protein 2/TRX2. Additionally, TRX1 is required for efficient transport of TRX2 to the nucleus, which is the site of capsid assembly. The sequence is that of Triplex capsid protein 2 from Human herpesvirus 2 (strain HG52) (HHV-2).